The following is a 147-amino-acid chain: Protein-export protein SecB (147 aa).

It belongs to the SecB family. Homotetramer, a dimer of dimers. One homotetramer interacts with 1 SecA dimer.

The protein resides in the cytoplasm. One of the proteins required for the normal export of preproteins out of the cell cytoplasm. It is a molecular chaperone that binds to a subset of precursor proteins, maintaining them in a translocation-competent state. It also specifically binds to its receptor SecA. In Neisseria meningitidis serogroup A / serotype 4A (strain DSM 15465 / Z2491), this protein is Protein-export protein SecB.